The following is a 921-amino-acid chain: Retinoblastoma-associated protein (921 aa).

Disordered regions lie at residues 1 to 31 and 603 to 634; these read MPPK…PPGG and RSPK…QKPQ. A compositionally biased stretch (polar residues) spans 612–634; that stretch reads HPQSGTSNPDAQPSATSQTQKPQ. The short motif at 853-869 is the Bipartite nuclear localization signal element; sequence KRSAEPSDAPKPLKRLR. Residues 873–921 are disordered; it reads EGQDEADGGKHLPQESKFQQKLAEMTSTRTRMQKQKLNDGNDTSANEEK. The span at 910-921 shows a compositional bias: polar residues; it reads NDGNDTSANEEK.

It belongs to the retinoblastoma protein (RB) family. In terms of assembly, interacts with and sequesters the E2F1 transcription factor, thereby inhibiting E2F1 transcription. Interacts with SUV39H1, KMT5B and KMT5C. (Microbial infection) Interacts with, and is inhibited by fowl adenovirus 1 protein GAM-1. In terms of processing, phosphorylated in G1, thereby releasing E2F1 which is then able to activate cell growth. Dephosphorylated at the late M phase. Phosphorylation of domain C promotes interaction between the C-terminal domain C and the Pocket domain, and thereby inhibits interactions with heterodimeric E2F/DP transcription factor complexes.

The protein resides in the nucleus. It is found in the cytoplasm. Tumor suppressor that is a key regulator of the G1/S transition of the cell cycle. The hypophosphorylated form binds transcription regulators of the E2F family, preventing transcription of E2F-responsive genes. Both physically blocks E2Fs transactivating domain and recruits chromatin-modifying enzymes that actively repress transcription. Cyclin and CDK-dependent phosphorylation of RB1 induces its dissociation from E2Fs, thereby activating transcription of E2F responsive genes and triggering entry into S phase. RB1 also promotes the G0-G1 transition upon phosphorylation and activation by CDK3/cyclin-C. The protein is Retinoblastoma-associated protein (RB1) of Gallus gallus (Chicken).